A 337-amino-acid polypeptide reads, in one-letter code: Glutaredoxin-3 (337 aa).

Ala2 carries the N-acetylalanine modification. Positions 2 to 119 constitute a Thioredoxin domain; it reads AAGAAEAGEA…LTKKVQRHVS (118 aa). The residue at position 119 (Ser119) is a Phosphoserine. Glutaredoxin domains follow at residues 144 to 238 and 239 to 337; these read HAAP…PKLE and ERLK…KGEN. [2Fe-2S] cluster contacts are provided by Cys161 and Cys263.

As to quaternary structure, homodimer; the homodimer is independent of 2Fe-2S clusters. Heterotrimer; forms a heterotrimeric complex composed by two BOLA2 molecules and one GLRX3 molecule; linked by [2Fe-2S] clusters. Interacts (via N-terminus) with PRKCQ/PKC-theta. Interacts (via C-terminus) with CSRP3. Interacts with CSRP2.

It is found in the cytoplasm. The protein resides in the cytosol. Its subcellular location is the cell cortex. It localises to the myofibril. The protein localises to the sarcomere. It is found in the z line. In terms of biological role, together with BOLA2, acts as a cytosolic iron-sulfur (Fe-S) cluster assembly factor that facilitates [2Fe-2S] cluster insertion into a subset of cytosolic proteins. Acts as a critical negative regulator of cardiac hypertrophy and a positive inotropic regulator. Required for hemoglobin maturation. Does not possess any thyoredoxin activity since it lacks the conserved motif that is essential for catalytic activity. This is Glutaredoxin-3 (Glrx3) from Mus musculus (Mouse).